Here is a 253-residue protein sequence, read N- to C-terminus: Type III pantothenate kinase (253 aa).

6 to 13 (DVGNTNIV) is an ATP binding site. A substrate-binding site is contributed by 107-110 (GADR). D109 serves as the catalytic Proton acceptor. D129 lines the K(+) pocket. T132 serves as a coordination point for ATP. T184 contributes to the substrate binding site.

Belongs to the type III pantothenate kinase family. In terms of assembly, homodimer. NH4(+) is required as a cofactor. K(+) serves as cofactor.

The protein resides in the cytoplasm. It carries out the reaction (R)-pantothenate + ATP = (R)-4'-phosphopantothenate + ADP + H(+). It functions in the pathway cofactor biosynthesis; coenzyme A biosynthesis; CoA from (R)-pantothenate: step 1/5. Catalyzes the phosphorylation of pantothenate (Pan), the first step in CoA biosynthesis. This is Type III pantothenate kinase from Exiguobacterium sibiricum (strain DSM 17290 / CCUG 55495 / CIP 109462 / JCM 13490 / 255-15).